The primary structure comprises 531 residues: Pyruvate kinase (531 aa).

Arg-86 provides a ligand contact to substrate. 4 residues coordinate K(+): Asn-88, Ser-90, Asp-121, and Thr-122. 88 to 91 provides a ligand contact to ATP; sequence NFSH. Residues Arg-128 and Lys-211 each contribute to the ATP site. Residue Glu-277 participates in Mg(2+) binding. The substrate site is built by Gly-300, Asp-301, and Thr-333. Asp-301 serves as a coordination point for Mg(2+).

Belongs to the pyruvate kinase family. Homotetramer. Mg(2+) serves as cofactor. K(+) is required as a cofactor.

The enzyme catalyses pyruvate + ATP = phosphoenolpyruvate + ADP + H(+). Its pathway is carbohydrate degradation; glycolysis; pyruvate from D-glyceraldehyde 3-phosphate: step 5/5. The polypeptide is Pyruvate kinase (PYK) (Eimeria tenella (Coccidian parasite)).